The primary structure comprises 1178 residues: DNA-directed RNA polymerase subunit beta' (1178 aa).

Cys-60, Cys-62, Cys-75, and Cys-78 together coordinate Zn(2+). Mg(2+) is bound by residues Asp-450, Asp-452, and Asp-454. Positions 795, 869, 876, and 879 each coordinate Zn(2+).

It belongs to the RNA polymerase beta' chain family. The RNAP catalytic core consists of 2 alpha, 1 beta, 1 beta' and 1 omega subunit. When a sigma factor is associated with the core the holoenzyme is formed, which can initiate transcription. Requires Mg(2+) as cofactor. It depends on Zn(2+) as a cofactor.

The enzyme catalyses RNA(n) + a ribonucleoside 5'-triphosphate = RNA(n+1) + diphosphate. DNA-dependent RNA polymerase catalyzes the transcription of DNA into RNA using the four ribonucleoside triphosphates as substrates. In Clostridium botulinum (strain ATCC 19397 / Type A), this protein is DNA-directed RNA polymerase subunit beta'.